The sequence spans 746 residues: WD repeat-containing protein 91 (746 aa).

Residues 183–215 (QRTNQVQEENEVLRQKLFALQAEIHRLKKEEQQ) are a coiled coil. At Ser-256 the chain carries Phosphoserine. The span at 265-278 (LLPQSKKSPSRLSP) shows a compositional bias: low complexity. Residues 265-336 (LLPQSKKSPS…QHRQRRLQDH (72 aa)) are disordered. Residues 282–299 (PPQTQSSAKKESFGSQTT) are compositionally biased toward polar residues. Phosphoserine occurs at positions 288 and 293. WD repeat units lie at residues 405–444 (EHHS…QTKA), 447–487 (ISKS…NLCE), 514–554 (AASS…QQLQ), 559–598 (PEPI…CAMS), 601–640 (AHCG…LKVS), 663–701 (VQVP…KVLE), and 708–746 (GHRA…AHKV).

Belongs to the WD repeat WDR91 family. Interacts with WDR81; involved in early to late endosome cargo transport. Interacts with BECN1; negatively regulates the PI3 kinase/PI3K activity associated with endosomal membranes.

It localises to the early endosome membrane. It is found in the late endosome membrane. Its function is as follows. Functions as a negative regulator of the PI3 kinase/PI3K activity associated with endosomal membranes via BECN1, a core subunit of the PI3K complex. By modifying the phosphatidylinositol 3-phosphate/PtdInsP3 content of endosomal membranes may regulate endosome fusion, recycling, sorting and early to late endosome transport. It is for instance, required for the delivery of cargos like BST2/tetherin from early to late endosome and thereby participates indirectly to their degradation by the lysosome. May play a role in meiosis. The sequence is that of WD repeat-containing protein 91 from Bos taurus (Bovine).